The following is a 487-amino-acid chain: MAGRGGLLMLENFIGGKFLPCSSYLDSYDPSTGEVYCHVPNSGKEEIEAAVEAARAAFPGWSSRSPQERSQVLQRLADLLEQSLEELAQAESKDQGKTITLARTMDIPRAVHNFRFFASSILHHTSECTQMDHLGCLHYTVRAPVGIAALISPWNLPLYLLTWKIAPAIAAGNTVIAKPSELTSVTAWMMCRLLEKAGVPPGVVNIVFGTGPRVGEALVSHPEVPLISFTGSQPTAERIMQLSAPHCKKLSLELGGKNPAVIFEDANLAECIPTTVRSSFANQGEICLCTSRIFVQRSIYSEFLKRFVEAARMWKVGIPSDPSADMGALISKAHLEKVRSYIKKARMEGAQILCGEGVDKLNLPPRNQAGYFMLPTVITDVKDESCCMKEEIFGPVTCVVPFDSEEEVIQRANNVKYGLAATVWSGNVGRVHRVAKKLQSGLVWTNCWLIRELNLPFGGMKSSGVGREGAKDSYEFFTEVKTITVKH.

231–236 (GSQPTA) contacts NAD(+). Catalysis depends on Glu253, which acts as the Proton acceptor. Cys287 functions as the Nucleophile in the catalytic mechanism.

Belongs to the aldehyde dehydrogenase family.

The protein resides in the cytoplasm. It catalyses the reaction 2-aminomuconate 6-semialdehyde + NAD(+) + H2O = (2Z,4E)-2-aminomuconate + NADH + 2 H(+). The protein operates within amino-acid degradation; L-kynurenine degradation. Functionally, catalyzes the NAD-dependent oxidation of 2-aminomuconic semialdehyde of the kynurenine metabolic pathway in L-tryptophan degradation. The polypeptide is 2-aminomuconic semialdehyde dehydrogenase (ALDH8A1) (Bos taurus (Bovine)).